The following is a 345-amino-acid chain: L-threonine 3-dehydrogenase (345 aa).

Cys-42 serves as a coordination point for Zn(2+). Residues Thr-44 and His-47 each act as charge relay system in the active site. Zn(2+) contacts are provided by His-67, Glu-68, Cys-97, Cys-100, Cys-103, and Cys-111. Residues Ile-179, Asp-199, Arg-204, 266–268 (LGI), and 290–291 (IY) contribute to the NAD(+) site.

This sequence belongs to the zinc-containing alcohol dehydrogenase family. In terms of assembly, homotetramer. Zn(2+) serves as cofactor.

Its subcellular location is the cytoplasm. It carries out the reaction L-threonine + NAD(+) = (2S)-2-amino-3-oxobutanoate + NADH + H(+). The protein operates within amino-acid degradation; L-threonine degradation via oxydo-reductase pathway; glycine from L-threonine: step 1/2. In terms of biological role, catalyzes the NAD(+)-dependent oxidation of L-threonine to 2-amino-3-ketobutyrate. The protein is L-threonine 3-dehydrogenase of Rhizobium etli (strain CIAT 652).